The chain runs to 95 residues: Aspartyl/glutamyl-tRNA(Asn/Gln) amidotransferase subunit C (95 aa).

It belongs to the GatC family. Heterotrimer of A, B and C subunits.

The enzyme catalyses L-glutamyl-tRNA(Gln) + L-glutamine + ATP + H2O = L-glutaminyl-tRNA(Gln) + L-glutamate + ADP + phosphate + H(+). It carries out the reaction L-aspartyl-tRNA(Asn) + L-glutamine + ATP + H2O = L-asparaginyl-tRNA(Asn) + L-glutamate + ADP + phosphate + 2 H(+). Its function is as follows. Allows the formation of correctly charged Asn-tRNA(Asn) or Gln-tRNA(Gln) through the transamidation of misacylated Asp-tRNA(Asn) or Glu-tRNA(Gln) in organisms which lack either or both of asparaginyl-tRNA or glutaminyl-tRNA synthetases. The reaction takes place in the presence of glutamine and ATP through an activated phospho-Asp-tRNA(Asn) or phospho-Glu-tRNA(Gln). The sequence is that of Aspartyl/glutamyl-tRNA(Asn/Gln) amidotransferase subunit C from Methylococcus capsulatus (strain ATCC 33009 / NCIMB 11132 / Bath).